The chain runs to 408 residues: Guanine nucleotide-binding protein alpha-14 subunit (408 aa).

GTP is bound by residues 38–45, 78–85, 201–205, 216–222, 241–245, 285–288, 325–328, and Ala-380; these read HSEELEAK, GGPSSGKS, NRISK, VHSRKAT, DVGGQ, FPNF, and NKVD. One can recognise a G-alpha domain in the interval 70–408; it reads SHIKILILGG…KANSKATGLS (339 aa). The segment at 73-86 is G1 motif; the sequence is KILILGGPSSGKST. Ser-85 is a Mg(2+) binding site. Positions 214-222 are G2 motif; it reads DIVHSRKAT. Residue Thr-222 coordinates Mg(2+). The tract at residues 237 to 246 is G3 motif; sequence LLMVDVGGQR. The G4 motif stretch occupies residues 321–328; it reads LLFFNKVD. The tract at residues 378–383 is G5 motif; sequence TTATNT.

The protein belongs to the G-alpha family. G proteins are composed of 3 units; alpha, beta and gamma. The alpha chain contains the guanine nucleotide binding site.

Guanine nucleotide-binding proteins (G proteins) are involved as modulators or transducers in various transmembrane signaling systems. In Caenorhabditis briggsae, this protein is Guanine nucleotide-binding protein alpha-14 subunit (gpa-14).